We begin with the raw amino-acid sequence, 253 residues long: TasA anchoring/assembly protein (253 aa).

Positions 1–32 (MFRLFHNQQKAKTKLKVLLIFQLSVIFSLTAA) are cleaved as a signal peptide. An important for TasA fiber formation region spans residues 50–57 (TFDVSLQT). Basic and acidic residues predominate over residues 190 to 241 (EKPTVPKKETKSDVKKENETTQKDIPEKTMKEETSQEAVTKEKETQSDQKES). The interval 190–253 (EKPTVPKKET…EDEKSNEADQ (64 aa)) is disordered.

It localises to the secreted. The protein localises to the cell wall. Its function is as follows. Required for biofilm formation. Required for the proper anchoring and polymerization of TasA amyloid fibers at the cell surface. Is also a minor component of TasA fibers. This chain is TasA anchoring/assembly protein, found in Bacillus subtilis (strain 168).